The chain runs to 262 residues: Ribosome maturation factor RimP (262 aa).

The tract at residues 197-262 is disordered; sequence RELGVLPPPP…LGQTDPTEGD (66 aa). The span at 223-233 shows a compositional bias: basic residues; the sequence is KLPKAKLKAAK. The segment covering 240–254 has biased composition (basic and acidic residues); sequence TKEHRLAAAERKRLG.

This sequence belongs to the RimP family.

The protein resides in the cytoplasm. Required for maturation of 30S ribosomal subunits. This Rhodopseudomonas palustris (strain BisB18) protein is Ribosome maturation factor RimP.